Reading from the N-terminus, the 280-residue chain is Probable inactive shikimate kinase like 1, chloroplastic (280 aa).

A chloroplast-targeting transit peptide spans 1–54 (MEIFSASASLTLTGFVPRLLPLLSPQARTTLCKPLLSSSSTRLISCHSRIAPSR).

Belongs to the shikimate kinase family.

Its subcellular location is the plastid. It localises to the chloroplast. Required for chloroplast biogenesis. This is Probable inactive shikimate kinase like 1, chloroplastic (SKL1) from Arabidopsis thaliana (Mouse-ear cress).